The chain runs to 114 residues: Protein yippee-like (114 aa).

In terms of domain architecture, Yippee spans 14 to 111; it reads RTYSCVHCRA…IELAHMIKEN (98 aa). The Zn(2+) site is built by C18, C21, C74, and C77.

Belongs to the yippee family.

Its function is as follows. Involved in regulating synaptic transmission in presynaptic neurons. In class IV dendritic arborization neurons (nociceptors), involved in regulating activation of their second-order neurons (SONs) and maintaining synaptic contact between nociceptors and their SONs. This is Protein yippee-like from Drosophila melanogaster (Fruit fly).